A 490-amino-acid chain; its full sequence is Argininosuccinate lyase (490 aa).

It belongs to the lyase 1 family. Argininosuccinate lyase subfamily.

The protein localises to the cytoplasm. The enzyme catalyses 2-(N(omega)-L-arginino)succinate = fumarate + L-arginine. It participates in amino-acid biosynthesis; L-arginine biosynthesis; L-arginine from L-ornithine and carbamoyl phosphate: step 3/3. The polypeptide is Argininosuccinate lyase (Bifidobacterium longum (strain DJO10A)).